The following is a 188-amino-acid chain: Ion-translocating oxidoreductase complex subunit B (188 aa).

Positions 1–26 are hydrophobic; it reads MNGVFLAIGALLPICLAGGALLGYAA. One can recognise a 4Fe-4S domain in the interval 32–90; it reads QGDPVAEQVNALLPQTQCGQCGYPGCKPYAEAIAAGDKINKCPPGGEATIRALADLLDL. Residues C49, C52, C57, C73, C113, C116, C119, C123, C143, C146, C149, and C153 each contribute to the [4Fe-4S] cluster site. 2 consecutive 4Fe-4S ferredoxin-type domains span residues 104–133 and 134–163; these read RVAY…GAAR and LMHT…MRET.

The protein belongs to the 4Fe4S bacterial-type ferredoxin family. RnfB subfamily. The complex is composed of six subunits: RnfA, RnfB, RnfC, RnfD, RnfE and RnfG. The cofactor is [4Fe-4S] cluster.

The protein resides in the cell inner membrane. Part of a membrane-bound complex that couples electron transfer with translocation of ions across the membrane. In Pseudomonas aeruginosa (strain UCBPP-PA14), this protein is Ion-translocating oxidoreductase complex subunit B.